The sequence spans 550 residues: Mycosin-2 (550 aa).

The signal sequence occupies residues 1 to 33; that stretch reads MASPLNRPGLRAAAASAALTLVALSANVPAAQA. The segment at 34–62 is disordered; the sequence is IPPPSVDPAMVPADARPGPDQPMRRSNSC. Residues 79 to 490 enclose the Peptidase S8 domain; it reads GFNLVNISKA…YGLVDPVAAL (412 aa). Residues D103 and H133 each act as charge relay system in the active site. Over residues 168–190 the composition is skewed to pro residues; it reads PPVTAAPAPPVEVPPPMPPPPPV. Residues 168 to 236 are disordered; sequence PPVTAAPAPP…PPPPPGAPDG (69 aa). S435 acts as the Charge relay system in catalysis. The helical transmembrane segment at 524–544 threads the bilayer; that stretch reads NIAIGFVGAVATGVLAMAIGA.

This sequence belongs to the peptidase S8 family.

It localises to the cell membrane. The chain is Mycosin-2 from Mycobacterium tuberculosis (strain ATCC 25618 / H37Rv).